The primary structure comprises 179 residues: UPF0134 protein MPN_145 (179 aa).

The protein belongs to the UPF0134 family.

The chain is UPF0134 protein MPN_145 from Mycoplasma pneumoniae (strain ATCC 29342 / M129 / Subtype 1) (Mycoplasmoides pneumoniae).